Reading from the N-terminus, the 147-residue chain is Ribonuclease H (147 aa).

Positions 5-141 (ARKQITLYSD…CDELARNEAE (137 aa)) constitute an RNase H type-1 domain. Mg(2+)-binding residues include Asp-14, Glu-52, Asp-74, and Asp-133.

It belongs to the RNase H family. As to quaternary structure, monomer. It depends on Mg(2+) as a cofactor.

The protein resides in the cytoplasm. The catalysed reaction is Endonucleolytic cleavage to 5'-phosphomonoester.. Functionally, endonuclease that specifically degrades the RNA of RNA-DNA hybrids. This is Ribonuclease H from Sulfurovum sp. (strain NBC37-1).